A 51-amino-acid polypeptide reads, in one-letter code: Insulin (51 aa).

3 disulfides stabilise this stretch: cysteine 8-cysteine 37, cysteine 20-cysteine 50, and cysteine 36-cysteine 41.

It belongs to the insulin family. Heterodimer of a B chain and an A chain linked by two disulfide bonds.

Its subcellular location is the secreted. Functionally, insulin decreases blood glucose concentration. It increases cell permeability to monosaccharides, amino acids and fatty acids. It accelerates glycolysis, the pentose phosphate cycle, and glycogen synthesis in liver. This is Insulin (ins) from Gadus morhua subsp. callarias (Baltic cod).